The chain runs to 420 residues: Anaerobic glycerol-3-phosphate dehydrogenase subunit B (420 aa).

Belongs to the anaerobic G-3-P dehydrogenase subunit B family. In terms of assembly, composed of a catalytic GlpA/B dimer and of membrane bound GlpC. Requires FMN as cofactor.

The catalysed reaction is a quinone + sn-glycerol 3-phosphate = dihydroxyacetone phosphate + a quinol. Its pathway is polyol metabolism; glycerol degradation via glycerol kinase pathway; glycerone phosphate from sn-glycerol 3-phosphate (anaerobic route): step 1/1. In terms of biological role, conversion of glycerol 3-phosphate to dihydroxyacetone. Uses fumarate or nitrate as electron acceptor. This Pectobacterium atrosepticum (strain SCRI 1043 / ATCC BAA-672) (Erwinia carotovora subsp. atroseptica) protein is Anaerobic glycerol-3-phosphate dehydrogenase subunit B.